A 66-amino-acid chain; its full sequence is Large ribosomal subunit protein bL32 (66 aa).

The protein belongs to the bacterial ribosomal protein bL32 family.

This is Large ribosomal subunit protein bL32 from Acetivibrio thermocellus (strain ATCC 27405 / DSM 1237 / JCM 9322 / NBRC 103400 / NCIMB 10682 / NRRL B-4536 / VPI 7372) (Clostridium thermocellum).